We begin with the raw amino-acid sequence, 140 residues long: UPF0251 protein Athe_2281 (140 aa).

The protein belongs to the UPF0251 family.

This chain is UPF0251 protein Athe_2281, found in Caldicellulosiruptor bescii (strain ATCC BAA-1888 / DSM 6725 / KCTC 15123 / Z-1320) (Anaerocellum thermophilum).